The sequence spans 81 residues: Cytochrome b559 subunit alpha (81 aa).

A helical membrane pass occupies residues Ile-21–Trp-35. His-23 provides a ligand contact to heme.

Belongs to the PsbE/PsbF family. As to quaternary structure, heterodimer of an alpha subunit and a beta subunit. PSII is composed of 1 copy each of membrane proteins PsbA, PsbB, PsbC, PsbD, PsbE, PsbF, PsbH, PsbI, PsbJ, PsbK, PsbL, PsbM, PsbT, PsbX, PsbY, PsbZ, Psb30/Ycf12, peripheral proteins PsbO, CyanoQ (PsbQ), PsbU, PsbV and a large number of cofactors. It forms dimeric complexes. Heme b serves as cofactor.

The protein localises to the cellular thylakoid membrane. Its function is as follows. This b-type cytochrome is tightly associated with the reaction center of photosystem II (PSII). PSII is a light-driven water:plastoquinone oxidoreductase that uses light energy to abstract electrons from H(2)O, generating O(2) and a proton gradient subsequently used for ATP formation. It consists of a core antenna complex that captures photons, and an electron transfer chain that converts photonic excitation into a charge separation. This Microcystis aeruginosa (strain NIES-843 / IAM M-2473) protein is Cytochrome b559 subunit alpha.